The primary structure comprises 465 residues: Ribulose bisphosphate carboxylase large chain (465 aa).

Lys4 is modified (N6,N6,N6-trimethyllysine). Positions 113 and 163 each coordinate substrate. Lys165 serves as the catalytic Proton acceptor. Lys167 contacts substrate. Residues Lys191, Asp193, and Glu194 each contribute to the Mg(2+) site. Lys191 bears the N6-carboxylysine mark. Catalysis depends on His284, which acts as the Proton acceptor. Positions 285, 317, and 369 each coordinate substrate.

Belongs to the RuBisCO large chain family. Type I subfamily. As to quaternary structure, heterohexadecamer of 8 large chains and 8 small chains; disulfide-linked. The disulfide link is formed within the large subunit homodimers. The cofactor is Mg(2+). In terms of processing, the disulfide bond which can form in the large chain dimeric partners within the hexadecamer appears to be associated with oxidative stress and protein turnover.

The protein resides in the plastid. The protein localises to the chloroplast. The catalysed reaction is 2 (2R)-3-phosphoglycerate + 2 H(+) = D-ribulose 1,5-bisphosphate + CO2 + H2O. The enzyme catalyses D-ribulose 1,5-bisphosphate + O2 = 2-phosphoglycolate + (2R)-3-phosphoglycerate + 2 H(+). Its function is as follows. RuBisCO catalyzes two reactions: the carboxylation of D-ribulose 1,5-bisphosphate, the primary event in carbon dioxide fixation, as well as the oxidative fragmentation of the pentose substrate in the photorespiration process. Both reactions occur simultaneously and in competition at the same active site. This is Ribulose bisphosphate carboxylase large chain from Platytheca verticillata.